A 315-amino-acid chain; its full sequence is Methionyl-tRNA formyltransferase (315 aa).

113–116 (SLLP) is a (6S)-5,6,7,8-tetrahydrofolate binding site.

This sequence belongs to the Fmt family.

It carries out the reaction L-methionyl-tRNA(fMet) + (6R)-10-formyltetrahydrofolate = N-formyl-L-methionyl-tRNA(fMet) + (6S)-5,6,7,8-tetrahydrofolate + H(+). Its function is as follows. Attaches a formyl group to the free amino group of methionyl-tRNA(fMet). The formyl group appears to play a dual role in the initiator identity of N-formylmethionyl-tRNA by promoting its recognition by IF2 and preventing the misappropriation of this tRNA by the elongation apparatus. In Yersinia pseudotuberculosis serotype O:1b (strain IP 31758), this protein is Methionyl-tRNA formyltransferase.